The sequence spans 329 residues: GTP 3',8-cyclase (329 aa).

Residues 1-229 form the Radical SAM core domain; the sequence is MNQIDYLRIS…EGQVRGNGPA (229 aa). Arg-8 is a GTP binding site. Residues Cys-15 and Cys-19 each contribute to the [4Fe-4S] cluster site. Position 21 (Tyr-21) interacts with S-adenosyl-L-methionine. A [4Fe-4S] cluster-binding site is contributed by Cys-22. Arg-60 provides a ligand contact to GTP. Position 64 (Gly-64) interacts with S-adenosyl-L-methionine. Thr-91 lines the GTP pocket. Ser-115 provides a ligand contact to S-adenosyl-L-methionine. Position 155 (Lys-155) interacts with GTP. Met-189 is an S-adenosyl-L-methionine binding site. [4Fe-4S] cluster is bound by residues Cys-252 and Cys-255. 257-259 serves as a coordination point for GTP; it reads RLR. Position 269 (Cys-269) interacts with [4Fe-4S] cluster.

The protein belongs to the radical SAM superfamily. MoaA family. As to quaternary structure, monomer and homodimer. [4Fe-4S] cluster is required as a cofactor.

It catalyses the reaction GTP + AH2 + S-adenosyl-L-methionine = (8S)-3',8-cyclo-7,8-dihydroguanosine 5'-triphosphate + 5'-deoxyadenosine + L-methionine + A + H(+). Its pathway is cofactor biosynthesis; molybdopterin biosynthesis. Its function is as follows. Catalyzes the cyclization of GTP to (8S)-3',8-cyclo-7,8-dihydroguanosine 5'-triphosphate. This Microcystis aeruginosa (strain NIES-843 / IAM M-2473) protein is GTP 3',8-cyclase.